The following is a 359-amino-acid chain: Phosphatidylglycerol--prolipoprotein diacylglyceryl transferase (359 aa).

The next 4 membrane-spanning stretches (helical) occupy residues 24–44 (VALR…IVWG), 58–78 (VLDI…LYHV), 98–118 (VWQG…GAWI), and 124–144 (GIPL…AQAI). R146 provides a ligand contact to a 1,2-diacyl-sn-glycero-3-phospho-(1'-sn-glycerol). Helical transmembrane passes span 193–213 (FVVH…VLLL), 222–243 (IGHG…FWIE), and 258–278 (VNSF…FAAT). The segment at 284 to 359 (PAELRPADGG…IDSKKDDAND (76 aa)) is disordered. Over residues 306 to 323 (IAQKEPEKNVEDAGKDEG) the composition is skewed to basic and acidic residues. The span at 336-349 (ASTASTGGEAGTKT) shows a compositional bias: low complexity. Residues 350-359 (IDSKKDDAND) show a composition bias toward basic and acidic residues.

Belongs to the Lgt family.

The protein localises to the cell membrane. The catalysed reaction is L-cysteinyl-[prolipoprotein] + a 1,2-diacyl-sn-glycero-3-phospho-(1'-sn-glycerol) = an S-1,2-diacyl-sn-glyceryl-L-cysteinyl-[prolipoprotein] + sn-glycerol 1-phosphate + H(+). It functions in the pathway protein modification; lipoprotein biosynthesis (diacylglyceryl transfer). Functionally, catalyzes the transfer of the diacylglyceryl group from phosphatidylglycerol to the sulfhydryl group of the N-terminal cysteine of a prolipoprotein, the first step in the formation of mature lipoproteins. This Rhodococcus jostii (strain RHA1) protein is Phosphatidylglycerol--prolipoprotein diacylglyceryl transferase.